A 472-amino-acid polypeptide reads, in one-letter code: Type I restriction enzyme BthVORF4518P methylase subunit (472 aa).

Residues 151-156 (QYFTPR), 181-183 (TGG), aspartate 214, and 243-244 (DS) each bind S-adenosyl-L-methionine.

It belongs to the N(4)/N(6)-methyltransferase family. The type I restriction/modification system is composed of three polypeptides R, M and S; the restriction enzyme has stoichiometry R(2)M(2)S(1) while the methyltransferase is M(2)S(1).

It carries out the reaction a 2'-deoxyadenosine in DNA + S-adenosyl-L-methionine = an N(6)-methyl-2'-deoxyadenosine in DNA + S-adenosyl-L-homocysteine + H(+). In terms of biological role, the subtype gamma methyltransferase (M) subunit of a type I restriction enzyme. The M and S subunits together form a methyltransferase (MTase) that methylates two adenine residues of an undetermined sequence. In the presence of the R subunit the complex can also act as an endonuclease, binding to the same target sequence but cutting the DNA some distance from this site. Whether the DNA is cut or modified depends on the methylation state of the target sequence. When the target site is unmodified, the DNA is cut. When the target site is hemimethylated, the complex acts as a maintenance MTase modifying the DNA so that both strands become methylated. After locating a non-methylated recognition site, the enzyme complex serves as a molecular motor that translocates DNA in an ATP-dependent manner until a collision occurs that triggers cleavage. This chain is Type I restriction enzyme BthVORF4518P methylase subunit, found in Bacteroides thetaiotaomicron (strain ATCC 29148 / DSM 2079 / JCM 5827 / CCUG 10774 / NCTC 10582 / VPI-5482 / E50).